Consider the following 119-residue polypeptide: Putative nitrilase-like protein YIL165C (119 aa).

Positions 1–82 (MKNIAYEGRL…EGLLTAEINT (82 aa)) constitute a CN hydrolase domain. Asp21 (proton acceptor) is an active-site residue.

It belongs to the carbon-nitrogen hydrolase superfamily. Nitrilase family.

This Saccharomyces cerevisiae (strain ATCC 204508 / S288c) (Baker's yeast) protein is Putative nitrilase-like protein YIL165C.